Reading from the N-terminus, the 494-residue chain is Transcriptional regulator calD (494 aa).

The protein localises to the nucleus. Transcription co-regulator that might be involved in the regulation of the expression of the gene cluster that mediates the biosynthesis of calbistrins and related compounds such as decumbenones. Calbistrin A is a secondary metabolite with an interesting structure that was recently found to have bioactivity against leukemia cells. It consists of two polyketides linked by an ester bond: a bicyclic decalin containing polyketide and a linear 12 carbon dioic acid structure. The protein is Transcriptional regulator calD of Penicillium decumbens.